A 271-amino-acid polypeptide reads, in one-letter code: Ribosomal RNA small subunit methyltransferase A (271 aa).

S-adenosyl-L-methionine contacts are provided by H11, L13, G38, E59, D84, and N109.

The protein belongs to the class I-like SAM-binding methyltransferase superfamily. rRNA adenine N(6)-methyltransferase family. RsmA subfamily.

The protein resides in the cytoplasm. The enzyme catalyses adenosine(1518)/adenosine(1519) in 16S rRNA + 4 S-adenosyl-L-methionine = N(6)-dimethyladenosine(1518)/N(6)-dimethyladenosine(1519) in 16S rRNA + 4 S-adenosyl-L-homocysteine + 4 H(+). Specifically dimethylates two adjacent adenosines (A1518 and A1519) in the loop of a conserved hairpin near the 3'-end of 16S rRNA in the 30S particle. May play a critical role in biogenesis of 30S subunits. This is Ribosomal RNA small subunit methyltransferase A from Nostoc sp. (strain PCC 7120 / SAG 25.82 / UTEX 2576).